A 580-amino-acid chain; its full sequence is FAD-dependent monooxygenase yanF (580 aa).

Residues 1–21 (MSSSAECRPIGWGGWGPDPNT) form a disordered region. The region spanning 150–322 (CRLNASCIVT…VEYDLTTNTG (173 aa)) is the FAD-binding PCMH-type domain. His-187 bears the Pros-8alpha-FAD histidine mark.

Belongs to the oxygen-dependent FAD-linked oxidoreductase family.

It functions in the pathway secondary metabolite biosynthesis; terpenoid biosynthesis. Functionally, FAD-dependent monooxygenase; part of the gene cluster that mediates the biosynthesis of yanuthone D, a fungal isoprenoid epoxycyclohexenone that acts as an antibiotic against fungi and bacteria. The first step of the pathway is the synthesis of 6-methylsalicylic acid (6-MSA) by the polyketide synthase yanA. 6-MSA is then converted to m-cresol by the decarboxylase yanB. The cytochrome P450 monooxygenase yanC then catalyzes the oxidation of m-cresol to toluquinol. Epoxidation of toluquinol is then performed by the short chain dehydrogenase yanD, with the help of yanE, and a further prenylated by yanG leads to 7-deacetoxyyanuthone A. The next step is the hydroxylation of C-22 of 7-deacetoxyyanuthone A by the cytochrome P450 monooxygenase yanH to yield 22-deacetylyanuthone A. O-Mevalon transferase yanI then attaches mevalon to the hydroxyl group of 22-deacetylyanuthone A to produce yanuthone E. Finally, the FAD-dependent monooxygenase yanF oxidizes the hydroxyl group at C15 of yanuthone E to form yanuthone D. Furthermore, several branching points in the pathway lead to the production of yanuthones F and G from 7-deacetoxyyanuthone A; yanuthones H and I from 22-deacetylyanuthone A; and yanuthone J from yanuthone E. The chain is FAD-dependent monooxygenase yanF from Aspergillus niger (strain ATCC 1015 / CBS 113.46 / FGSC A1144 / LSHB Ac4 / NCTC 3858a / NRRL 328 / USDA 3528.7).